The chain runs to 488 residues: Calcium/calmodulin-dependent protein kinase type II subunit delta (488 aa).

At Ala-2 the chain carries N-acetylalanine. The 259-residue stretch at 14 to 272 folds into the Protein kinase domain; the sequence is YQLFEELGKG…ASEALKHPWI (259 aa). ATP contacts are provided by residues 20–28 and Lys-43; that span reads LGKGAFSVV. The active-site Proton acceptor is Asp-136. Residues 283 to 292 form an autoinhibitory domain region; the sequence is HRQETVDCLK. Thr-287 carries the phosphothreonine; by autocatalysis modification. The segment at 291–301 is calmodulin-binding; the sequence is LKKFNARRKLK. A phosphothreonine; by autocatalysis mark is found at Thr-306 and Thr-307. Phosphoserine is present on Ser-315. N6-acetyllysine is present on Lys-317. A phosphoserine mark is found at Ser-318 and Ser-340. Positions 325-350 are disordered; that stretch reads GVKKRKSSSSVQMMESTESSNTTIED. The span at 332–347 shows a compositional bias: polar residues; the sequence is SSSVQMMESTESSNTT. A Phosphothreonine modification is found at Thr-341. At Ser-343 the chain carries Phosphoserine. A phosphothreonine mark is found at Thr-346 and Thr-347. Ser-414 is subject to Phosphoserine.

This sequence belongs to the protein kinase superfamily. CAMK Ser/Thr protein kinase family. CaMK subfamily. CAMK2 is composed of 4 different chains: alpha (CAMK2A), beta (CAMK2B), gamma (CAMK2G), and delta (CAMK2D). The different isoforms assemble into homo- or heteromultimeric holoenzymes composed of 12 subunits with two hexameric rings stacked one on top of the other. Interacts with RRAD and CACNB2. In terms of processing, autophosphorylation of Thr-287 following activation by Ca(2+)/calmodulin. Phosphorylation of Thr-287 locks the kinase into an activated state.

The protein resides in the cell membrane. It localises to the sarcolemma. It is found in the sarcoplasmic reticulum membrane. It catalyses the reaction L-seryl-[protein] + ATP = O-phospho-L-seryl-[protein] + ADP + H(+). It carries out the reaction L-threonyl-[protein] + ATP = O-phospho-L-threonyl-[protein] + ADP + H(+). Its activity is regulated as follows. Activated by Ca(2+)/calmodulin. Binding of calmodulin results in conformational change that relieves intrasteric autoinhibition and allows autophosphorylation of Thr-287 which turns the kinase in a constitutively active form and confers to the kinase a Ca(2+)-independent activity. Functionally, calcium/calmodulin-dependent protein kinase involved in the regulation of Ca(2+) homeostatis and excitation-contraction coupling (ECC) in heart by targeting ion channels, transporters and accessory proteins involved in Ca(2+) influx into the myocyte, Ca(2+) release from the sarcoplasmic reticulum (SR), SR Ca(2+) uptake and Na(+) and K(+) channel transport. Targets also transcription factors and signaling molecules to regulate heart function. In its activated form, is involved in the pathogenesis of dilated cardiomyopathy and heart failure. Contributes to cardiac decompensation and heart failure by regulating SR Ca(2+) release via direct phosphorylation of RYR2 Ca(2+) channel on 'Ser-2808'. In the nucleus, phosphorylates the MEF2 repressor HDAC4, promoting its nuclear export and binding to 14-3-3 protein, and expression of MEF2 and genes involved in the hypertrophic program. Is essential for left ventricular remodeling responses to myocardial infarction. In pathological myocardial remodeling acts downstream of the beta adrenergic receptor signaling cascade to regulate key proteins involved in ECC. Regulates Ca(2+) influx to myocytes by binding and phosphorylating the L-type Ca(2+) channel subunit beta-2 CACNB2. In addition to Ca(2+) channels, can target and regulate the cardiac sarcolemmal Na(+) channel Nav1.5/SCN5A and the K+ channel Kv4.3/KCND3, which contribute to arrhythmogenesis in heart failure. Phosphorylates phospholamban (PLN/PLB), an endogenous inhibitor of SERCA2A/ATP2A2, contributing to the enhancement of SR Ca(2+) uptake that may be important in frequency-dependent acceleration of relaxation (FDAR) and maintenance of contractile function during acidosis. May participate in the modulation of skeletal muscle function in response to exercise, by regulating SR Ca(2+) transport through phosphorylation of PLN/PLB and triadin, a ryanodine receptor-coupling factor. In response to interferon-gamma (IFN-gamma) stimulation, catalyzes phosphorylation of STAT1, stimulating the JAK-STAT signaling pathway. The polypeptide is Calcium/calmodulin-dependent protein kinase type II subunit delta (CAMK2D) (Bos taurus (Bovine)).